The chain runs to 416 residues: 2-amino-3-ketobutyrate coenzyme A ligase, mitochondrial (416 aa).

Residues 1 to 18 (MWASFMWHGALSPGRRAH) constitute a mitochondrion transit peptide. K42 carries the post-translational modification N6-acetyllysine; alternate. K42 carries the N6-succinyllysine; alternate modification. Position 131–132 (131–132 (CF)) interacts with pyridoxal 5'-phosphate. H156 serves as a coordination point for substrate. The residue at position 184 (K184) is an N6-acetyllysine; alternate. At K184 the chain carries N6-succinyllysine; alternate. Residues S203, 259–262 (TLGK), and 292–293 (SN) contribute to the pyridoxal 5'-phosphate site. The residue at position 262 (K262) is an N6-(pyridoxal phosphate)lysine. Residues K323 and K365 each carry the N6-succinyllysine modification. The residue at position 380 (K380) is an N6-acetyllysine; alternate. Residue K380 is modified to N6-succinyllysine; alternate. A substrate-binding site is contributed by R386.

This sequence belongs to the class-II pyridoxal-phosphate-dependent aminotransferase family. It depends on pyridoxal 5'-phosphate as a cofactor.

The protein resides in the mitochondrion. The protein localises to the nucleus. It carries out the reaction glycine + acetyl-CoA = (2S)-2-amino-3-oxobutanoate + CoA. The protein operates within amino-acid degradation; L-threonine degradation via oxydo-reductase pathway; glycine from L-threonine: step 2/2. Its function is as follows. Pyridoxal phosphate (PLP) dependent enzyme, which catalyzes the cleavage of 2-amino-3-oxobutanoate to glycine and acetyl-CoA. Catalyzes the second reaction step on the main metabolic degradation pathway for L-threonine. The chain is 2-amino-3-ketobutyrate coenzyme A ligase, mitochondrial (Gcat) from Mus musculus (Mouse).